We begin with the raw amino-acid sequence, 858 residues long: DNA mismatch repair protein MutS (858 aa).

An ATP-binding site is contributed by 637 to 644 (GPNMAGKS).

The protein belongs to the DNA mismatch repair MutS family.

This protein is involved in the repair of mismatches in DNA. It is possible that it carries out the mismatch recognition step. This protein has a weak ATPase activity. The polypeptide is DNA mismatch repair protein MutS (Protochlamydia amoebophila (strain UWE25)).